The sequence spans 741 residues: MVRYMVTSALPYANGPIHAGHLAGAYLPADIFVRYLRLKGEEVLFICGTDEHGTPITFRALKEGRSPREIVDEFHEHIKTTFERAKISFDFFGRTELPVHYRLSQEFFLKALENGHLVKKVTKQAYCEHDKMFLPDRYVIGTCPYCGAENQRGDQCEVCGHPLTPEILINPRCNICGNPITFKDSAHYYIRMQDFEERLKKWVESQEHWKPNVRNTVLGWINEGLEERAITRDLDWGIPVPLDDEDVKGKVLYVWFEAPIGYISITIEHLKREGKENEWKKFWLNLDGETKVIHFIGKDNIPFHAIFWPAFLMAYGKYRDEEVEAEWNLPYDIPANEYLNLEGKKFSTSRNWAIWVHEFLDVWPADYLRYYLTAIMPETRDSDFSFEDFKKKINEELVNNLGNFVHRAMTFVNRYFDGVVPERGELNDLDRQALEEIEKAFKETGELISNYRFKDALKRVMELAIFGNRYFDYQKPWKTAKENRERTATTVNVSLQIVKALGILLEPFLPDASEKIWHLLNLEEVKKWSFEELPAGHRVRKAFPMFRKVTDGEIIYFIVNYIGRGNPDSAKILLNKYYKQEDVVKVTLERFGEKRKDEALALLKSIYGDEFKGEKPEKAGKAEKKEKVKEGKKMEYVSFDEFAKLDLRVGKIIEVNDHPNADRLYVVKVDLGDEVRQLVAGLKKYYKPEELLGHYVVIIANLEPKKLRGVESQGMLLAADDGERVALLMPDKEVKLGARIR.

The 'HIGH' region signature appears at 11–21 (PYANGPIHAGH). 4 residues coordinate Zn(2+): Cys-143, Cys-146, Cys-156, and Cys-159. Residues 345–349 (KFSTS) carry the 'KMSKS' region motif. Residue Thr-348 participates in ATP binding. The 101-residue stretch at 641–741 (EFAKLDLRVG…KEVKLGARIR (101 aa)) folds into the tRNA-binding domain.

This sequence belongs to the class-I aminoacyl-tRNA synthetase family. MetG type 1 subfamily. Homodimer. The cofactor is Zn(2+).

The protein localises to the cytoplasm. It catalyses the reaction tRNA(Met) + L-methionine + ATP = L-methionyl-tRNA(Met) + AMP + diphosphate. Its function is as follows. Is required not only for elongation of protein synthesis but also for the initiation of all mRNA translation through initiator tRNA(fMet) aminoacylation. This is Methionine--tRNA ligase from Thermococcus kodakarensis (strain ATCC BAA-918 / JCM 12380 / KOD1) (Pyrococcus kodakaraensis (strain KOD1)).